The chain runs to 142 residues: Galectin-16 (142 aa).

The region spanning 6–138 (VPYKLPVSLS…DVSLDSVLVN (133 aa)) is the Galectin domain.

In terms of tissue distribution, predominantly and highly expressed in the placenta where it is localized mainly in the syncytiotrophoblast and in the endothelia of fetal vessels. Also detected in the amnion and chorionic trophoblasts in fetal membranes.

In terms of biological role, binds lactose with high affinity. Strong inducer of T-cell apoptosis. The sequence is that of Galectin-16 from Homo sapiens (Human).